The chain runs to 276 residues: Glutamate racemase (276 aa).

Substrate is bound by residues 9-10 (DS) and 41-42 (YG). C72 (proton donor/acceptor) is an active-site residue. Position 73–74 (73–74 (NT)) interacts with substrate. The active-site Proton donor/acceptor is C183. Residue 184–185 (TH) participates in substrate binding.

The protein belongs to the aspartate/glutamate racemases family.

It catalyses the reaction L-glutamate = D-glutamate. Its pathway is cell wall biogenesis; peptidoglycan biosynthesis. Provides the (R)-glutamate required for cell wall biosynthesis. The protein is Glutamate racemase of Shouchella clausii (strain KSM-K16) (Alkalihalobacillus clausii).